The sequence spans 354 residues: Probable tartrate dehydrogenase/decarboxylase (354 aa).

The Mn(2+) site is built by aspartate 221, aspartate 245, and aspartate 249.

It belongs to the isocitrate and isopropylmalate dehydrogenases family. Mg(2+) serves as cofactor. Mn(2+) is required as a cofactor. The cofactor is K(+).

It carries out the reaction tartrate + NAD(+) = 2-hydroxy-3-oxosuccinate + NADH + H(+). The catalysed reaction is (2R,3S)-tartrate + NAD(+) = 2-hydroxy-3-oxosuccinate + NADH + H(+). It catalyses the reaction (2R,3R)-tartrate + NAD(+) = 2-hydroxy-3-oxosuccinate + NADH + H(+). The enzyme catalyses (2R,3R)-tartrate + H(+) = (R)-glycerate + CO2. It carries out the reaction (R)-malate + NAD(+) = pyruvate + CO2 + NADH. Functionally, has multiple catalytic activities. Apart from catalyzing the oxidation of (+)-tartrate to oxaloglycolate, also converts meso-tartrate to D-glycerate and catalyzes the oxidative decarboxylation of D-malate to pyruvate. The protein is Probable tartrate dehydrogenase/decarboxylase (ycsA) of Bacillus subtilis (strain 168).